The chain runs to 382 residues: C-type lectin domain-containing protein 38 (382 aa).

The Cytoplasmic segment spans residues 1–40; it reads MAIFYDDPLERLNQPIKTKSYRKKQVVQRVHVFIFDNWKL. Residues 41-61 form a helical membrane-spanning segment; it reads ILLGILNLIFLIIAIVFAILF. The Extracellular segment spans residues 62 to 382; the sequence is FVGSADCAQL…FFLCKRAIDF (321 aa). Residues 97-116 are disordered; the sequence is NAITTTQGTPSNKTSTTTPS. The span at 100–116 shows a compositional bias: low complexity; it reads TTTQGTPSNKTSTTTPS. N-linked (GlcNAc...) asparagine glycosylation is found at Asn108 and Asn189. C-type lectin domains lie at 129–250 and 264–377; these read VGTK…FVCE and YNKN…FLCK. 4 disulfide bridges follow: Cys150–Cys249, Cys223–Cys241, Cys285–Cys376, and Cys348–Cys368.

As to expression, expressed in ventral cord motor neurons and PLM touch neurons.

The protein resides in the membrane. Involved in negative modulation of unc-40-mediated axon outgrowth. Required for proper presynaptic development in axons that have reached their targets. May function in concert with E3 ubiquitin-protein ligase rpm-1 in regulating axon outgrowth. This Caenorhabditis elegans protein is C-type lectin domain-containing protein 38.